The following is a 175-amino-acid chain: Adenylate kinase isoenzyme 6 homolog (175 aa).

The ATP site is built by Gly-17, Gly-19, Lys-20, Thr-21, and Ser-22. The interval 37-60 (DISSAVKEKELHDGWDSEFQCYIL) is NMPbind. Positions 112 to 122 (KRNYNQHKITN) are LID. Arg-113 is a binding site for ATP.

It belongs to the adenylate kinase family. AK6 subfamily. As to quaternary structure, monomer and homodimer. Interacts with small ribosomal subunit protein uS11. Not a structural component of 43S pre-ribosomes, but transiently interacts with them by binding to uS11.

The protein localises to the cytoplasm. Its subcellular location is the nucleus. It catalyses the reaction AMP + ATP = 2 ADP. The catalysed reaction is ATP + H2O = ADP + phosphate + H(+). Broad-specificity nucleoside monophosphate (NMP) kinase that catalyzes the reversible transfer of the terminal phosphate group between nucleoside triphosphates and monophosphates. Also has ATPase activity. Involved in the late cytoplasmic maturation steps of the 40S ribosomal particles, specifically 18S rRNA maturation. While NMP activity is not required for ribosome maturation, ATPase activity is. Associates transiently with small ribosomal subunit protein uS11. ATP hydrolysis breaks the interaction with uS11. May temporarily remove uS11 from the ribosome to enable a conformational change of the ribosomal RNA that is needed for the final maturation step of the small ribosomal subunit. Its NMP activity may have a role in nuclear energy homeostasis. The chain is Adenylate kinase isoenzyme 6 homolog from Dictyostelium discoideum (Social amoeba).